We begin with the raw amino-acid sequence, 73 residues long: Translation initiation factor IF-1 (73 aa).

The S1-like domain occupies 1-73 (MANKEELIEF…SKGRITYRAR (73 aa)).

It belongs to the IF-1 family. In terms of assembly, component of the 30S ribosomal translation pre-initiation complex which assembles on the 30S ribosome in the order IF-2 and IF-3, IF-1 and N-formylmethionyl-tRNA(fMet); mRNA recruitment can occur at any time during PIC assembly.

It is found in the cytoplasm. One of the essential components for the initiation of protein synthesis. Stabilizes the binding of IF-2 and IF-3 on the 30S subunit to which N-formylmethionyl-tRNA(fMet) subsequently binds. Helps modulate mRNA selection, yielding the 30S pre-initiation complex (PIC). Upon addition of the 50S ribosomal subunit IF-1, IF-2 and IF-3 are released leaving the mature 70S translation initiation complex. In Acinetobacter baylyi (strain ATCC 33305 / BD413 / ADP1), this protein is Translation initiation factor IF-1.